The following is a 260-amino-acid chain: Putative cysteine-rich repeat secretory protein 23 (260 aa).

The first 31 residues, Met-1–Ser-31, serve as a signal peptide directing secretion. 2 consecutive Gnk2-homologous domains span residues Tyr-38–Tyr-136 and Leu-142–Phe-254.

It belongs to the cysteine-rich repeat secretory protein family.

It localises to the secreted. This Arabidopsis thaliana (Mouse-ear cress) protein is Putative cysteine-rich repeat secretory protein 23 (CRRSP23).